Consider the following 329-residue polypeptide: Phosphate acetyltransferase (329 aa).

Belongs to the phosphate acetyltransferase and butyryltransferase family.

The protein localises to the cytoplasm. The enzyme catalyses acetyl-CoA + phosphate = acetyl phosphate + CoA. Its pathway is metabolic intermediate biosynthesis; acetyl-CoA biosynthesis; acetyl-CoA from acetate: step 2/2. The sequence is that of Phosphate acetyltransferase (pta) from Staphylococcus epidermidis (strain ATCC 12228 / FDA PCI 1200).